Reading from the N-terminus, the 507-residue chain is Proline--tRNA ligase (507 aa).

It belongs to the class-II aminoacyl-tRNA synthetase family. ProS type 3 subfamily. In terms of assembly, homodimer.

It is found in the cytoplasm. The catalysed reaction is tRNA(Pro) + L-proline + ATP = L-prolyl-tRNA(Pro) + AMP + diphosphate. Catalyzes the attachment of proline to tRNA(Pro) in a two-step reaction: proline is first activated by ATP to form Pro-AMP and then transferred to the acceptor end of tRNA(Pro). This chain is Proline--tRNA ligase, found in Protochlamydia amoebophila (strain UWE25).